Reading from the N-terminus, the 691-residue chain is Elongation factor G (691 aa).

Positions Asp8 to Val283 constitute a tr-type G domain. GTP-binding positions include Ala17–Thr24, Asp81–His85, and Asn135–Asp138.

The protein belongs to the TRAFAC class translation factor GTPase superfamily. Classic translation factor GTPase family. EF-G/EF-2 subfamily.

Its subcellular location is the cytoplasm. Functionally, catalyzes the GTP-dependent ribosomal translocation step during translation elongation. During this step, the ribosome changes from the pre-translocational (PRE) to the post-translocational (POST) state as the newly formed A-site-bound peptidyl-tRNA and P-site-bound deacylated tRNA move to the P and E sites, respectively. Catalyzes the coordinated movement of the two tRNA molecules, the mRNA and conformational changes in the ribosome. In Nitratidesulfovibrio vulgaris (strain ATCC 29579 / DSM 644 / CCUG 34227 / NCIMB 8303 / VKM B-1760 / Hildenborough) (Desulfovibrio vulgaris), this protein is Elongation factor G.